A 370-amino-acid polypeptide reads, in one-letter code: Homospermidine synthase 1 (370 aa).

This sequence belongs to the deoxyhypusine synthase family. As to quaternary structure, homotetramer. The cofactor is NAD(+). The N-terminus is blocked. Expressed in roots.

The catalysed reaction is putrescine + spermidine = sym-homospermidine + propane-1,3-diamine. The protein operates within alkaloid biosynthesis; pyrrolizidine alkaloid biosynthesis. Catalyzes the transfer of an aminobutyl unit from spermidine onto putrescine. The resulting polyamine homospermidine is a precursor in the biosynthesis of pyrrolizidine alkaloids. This chain is Homospermidine synthase 1 (HSS1), found in Senecio vernalis (Spring groundsel).